The chain runs to 1228 residues: Ribosomal RNA-processing protein 12 (1228 aa).

2 positions are modified to phosphoserine: Ser1059 and Ser1067. The tract at residues 1168–1228 (GPVRGQRNKL…GPKFKSRKKL (61 aa)) is disordered. Basic residues predominate over residues 1212-1228 (IGKHNKKGPKFKSRKKL).

It belongs to the RRP12 family. Interacts with GSP1.

Its subcellular location is the cytoplasm. It localises to the nucleus. The protein localises to the nucleolus. Its function is as follows. In association with GSP1, required for nuclear export of both pre-40S and pre-60S ribosomal subunits. Required for the late maturation of the 18S and 5.8S rRNA of the pre-40S ribosomes and for maturation of the 25S and 5.8S rRNA of the pre-60S ribosomes. In Saccharomyces cerevisiae (strain ATCC 204508 / S288c) (Baker's yeast), this protein is Ribosomal RNA-processing protein 12 (RRP12).